Here is an 889-residue protein sequence, read N- to C-terminus: Inter-alpha-trypsin inhibitor heavy chain H3 (889 aa).

A signal peptide spans 1-21; it reads MRTMWWPCLVLALLSGLETSG. A propeptide spanning residues 22–33 is cleaved from the precursor; sequence FPRSPLQLLGKR. The VIT domain maps to 29-158; it reads LLGKRSLPEG…KVTFELTYEE (130 aa). N91 is a glycosylation site (N-linked (GlcNAc...) asparagine). In terms of domain architecture, VWFA spans 284–467; it reads NIVFVIDVSG…LQLQGFYEEV (184 aa). A glycan (N-linked (GlcNAc...) asparagine) is linked at N580. Aspartate 1-(chondroitin 4-sulfate)-ester is present on D649. The propeptide occupies 650 to 889; it reads PHFIIQIPGK…HTDYIVPSLF (240 aa).

Belongs to the ITIH family. In terms of assembly, I-alpha-I plasma protease inhibitors are assembled from one or two heavy chains (HC) and one light chain, bikunin. Pre-alpha-inhibitor (P-alpha-I) is composed of ITIH3/HC3 and bikunin. Heavy chains are linked to bikunin via chondroitin 4-sulfate esterified to the alpha-carboxyl of the C-terminal aspartate after propeptide cleavage. In terms of tissue distribution, expressed in both liver and brain.

The protein resides in the secreted. Its function is as follows. May act as a carrier of hyaluronan in serum or as a binding protein between hyaluronan and other matrix protein, including those on cell surfaces in tissues to regulate the localization, synthesis and degradation of hyaluronan which are essential to cells undergoing biological processes. The protein is Inter-alpha-trypsin inhibitor heavy chain H3 (Itih3) of Mus musculus (Mouse).